We begin with the raw amino-acid sequence, 314 residues long: MRAFTYKDGKLYEDKELTIPVHCSNPTYEILKHVKIPSHLTDVIVYEQTYEQSLSRLIFVGLDSKGRRQYFYGKMHVQRRNSARDTIFIKVHRVIDKIHKFIDDTIEHKNDVLFQLGVFMLMETSFFIRMGKVKYLKENDTVGLLTLKNKNIVRENRKILIHFVGKDKIIHNFTVHSSNRLYKPLLRLIGRKEPDSFLFHKLSEKKVYKAVQQFGIRLKDLRTYGVNYTFLYNFWTNVKSLNPIPPIKKMISTSIKQTADIVGHTPSISKRAYIANTVLEYLTHDSELINTIRDISFDEFIRLITDYITNTQTV.

Residues 73-314 enclose the Topo IB-type catalytic domain; that stretch reads GKMHVQRRNS…TDYITNTQTV (242 aa). The active-site O-(3'-phospho-DNA)-tyrosine intermediate is the tyrosine 273.

It belongs to the type IB topoisomerase family.

It carries out the reaction ATP-independent breakage of single-stranded DNA, followed by passage and rejoining.. In terms of biological role, releases the supercoiling and torsional tension of DNA introduced during the DNA replication and transcription by transiently cleaving and rejoining one strand of the DNA duplex. Introduces a single-strand break via transesterification at a target site in duplex DNA. The scissile phosphodiester is attacked by the catalytic tyrosine of the enzyme, resulting in the formation of a DNA-(3'-phosphotyrosyl)-enzyme intermediate and the expulsion of a 5'-OH DNA strand. The free DNA strand then undergoes passage around the unbroken strand thus removing DNA supercoils. Finally, in the religation step, the DNA 5'-OH attacks the covalent intermediate to expel the active-site tyrosine and restore the DNA phosphodiester backbone. The chain is DNA topoisomerase 1 (TOP1) from Oryctolagus cuniculus (Rabbit).